The chain runs to 78 residues: D-alanyl carrier protein (78 aa).

Positions 1–78 (MAFRENVLEI…MIITQLEALK (78 aa)) constitute a Carrier domain. O-(pantetheine 4'-phosphoryl)serine is present on Ser36.

The protein belongs to the DltC family. 4'-phosphopantetheine is transferred from CoA to a specific serine of apo-DCP.

It is found in the cytoplasm. It functions in the pathway cell wall biogenesis; lipoteichoic acid biosynthesis. In terms of biological role, carrier protein involved in the D-alanylation of lipoteichoic acid (LTA). The loading of thioester-linked D-alanine onto DltC is catalyzed by D-alanine--D-alanyl carrier protein ligase DltA. The DltC-carried D-alanyl group is further transferred to cell membrane phosphatidylglycerol (PG) by forming an ester bond, probably catalyzed by DltD. D-alanylation of LTA plays an important role in modulating the properties of the cell wall in Gram-positive bacteria, influencing the net charge of the cell wall. The protein is D-alanyl carrier protein of Listeria innocua serovar 6a (strain ATCC BAA-680 / CLIP 11262).